Here is a 1405-residue protein sequence, read N- to C-terminus: Protein crumbs homolog 1 (1405 aa).

A signal peptide spans 1–27; it reads MKLKRTAYLLFLYLSSSLLICIKNSFC. At 28–1339 the chain is on the extracellular side; sequence NKNNTRCLSG…RCELDLADDR (1312 aa). In terms of domain architecture, EGF-like 1; atypical spans 30–67; sequence NNTRCLSGPCQNNSTCKHFPQDNNCCLDTANNLDKDCE. Cystine bridges form between C34-C45, C39-C54, C55-C66, C73-C84, C78-C95, C97-C106, C113-C124, C118-C133, C135-C144, C151-C162, C156-C171, C173-C182, C189-C200, C194-C209, C211-C220, C227-C238, C232-C247, C249-C258, C265-C276, C270-C285, C287-C297, C304-C315, C309-C324, C326-C335, C342-C353, C347-C382, C384-C393, C400-C411, C405-C420, C422-C437, C444-C455, C449-C468, and C470-C479. N-linked (GlcNAc...) asparagine glycosylation is present at N41. 2 EGF-like domains span residues 69 to 107 and 109 to 145; these read LKDPCFSSPCQGIATCVKIPGEGNFLCQCPPGYSGLNCE and ATNSCGGNLCQHGGTCRKDPEHPVCICPPGYAGRFCE. Residues 147-183 form the EGF-like 4; calcium-binding domain; the sequence is DHNECASSPCHNGAMCQDGINGYSCFCVPGYQGRHCD. An EGF-like 5; calcium-binding domain is found at 185–221; that stretch reads EVDECVSDPCKNEAVCLNEIGRYTCVCPQEFSGVNCE. The region spanning 223–259 is the EGF-like 6; calcium-binding domain; sequence EIDECRSQPCLHGATCQDAPGGYSCDCAPGFLGEHCE. 5 consecutive EGF-like domains span residues 261–298, 300–336, 338–394, 396–438, and 440–480; these read SVNECESQPCLHGGLCVDGRNSYHCDCTGSGFTGMHCE, LIPLCWSKPCHNDATCEDTVDSYICHCRPGYTGALCE, DINE…IHCE, DVDE…ENCS, and ILLG…PLCE. One can recognise a Laminin G-like 1 domain in the interval 482–669; that stretch reads VTTLSFGSNG…GLSSNVKAGC (188 aa). N560 and N656 each carry an N-linked (GlcNAc...) asparagine glycan. Cystine bridges form between C641/C669, C675/C686, C680/C695, and C697/C706. The region spanning 671-707 is the EGF-like 12 domain; that stretch reads GKDWCESQPCQNRGRCINLWQGYQCECDRPYTGSNCL. Residues 713–884 form the Laminin G-like 2 domain; sequence GRFGQDDSTG…PILVNVTQGC (172 aa). N756 and N879 each carry an N-linked (GlcNAc...) asparagine glycan. Intrachain disulfides connect C850–C884, C890–C901, C895–C910, C912–C921, C927–C938, and C932–C947. EGF-like domains follow at residues 886–922 and 923–959; these read GDNTCKSNPCHNGGVCHSLWDDFSCSCPTNTAGRACE and QVQWCQLSPCPPTAECQLLPQGFECIANAVFSGLSRE. One can recognise a Laminin G-like 3 domain in the interval 950-1136; sequence NAVFSGLSRE…VSTNMVLTGC (187 aa). 3 N-linked (GlcNAc...) asparagine glycosylation sites follow: N967, N974, and N999. 16 cysteine pairs are disulfide-bonded: C1095–C1136, C1142–C1153, C1147–C1162, C1164–C1173, C1180–C1190, C1185–C1199, C1201–C1210, C1217–C1228, C1222–C1237, C1239–C1248, C1258–C1273, C1267–C1282, C1284–C1293, C1300–C1311, C1305–C1320, and C1322–C1331. The region spanning 1138–1174 is the EGF-like 15 domain; that stretch reads PSNACHSSPCLHGGNCEDSYSSYRCACLSGWSGTHCE. In terms of domain architecture, EGF-like 16; calcium-binding spans 1176–1211; that stretch reads NIDECFSSPCIHGNCSDGVAAYHCRCEPGYTGVNCE. Residue N1189 is glycosylated (N-linked (GlcNAc...) asparagine). 2 EGF-like domains span residues 1213-1249 and 1254-1294; these read DVDNCKSHQCANGATCVPEAHGYSCLCFGNFTGRFCR and PSTV…EWCE. Residues N1242 and N1264 are each glycosylated (N-linked (GlcNAc...) asparagine). Positions 1296–1332 constitute an EGF-like 19; calcium-binding domain; sequence DINECASDPCINGGLCRDLVNRFLCICDVAFAGERCE. A helical transmembrane segment spans residues 1340 to 1360; sequence LLGIFTAVGSGTLALFFILLL. Residues 1361–1405 are Cytoplasmic-facing; that stretch reads AGVASLIASNKRATQGTYSPSGQEKAGPRVEMWIRMPPPALERLI.

This sequence belongs to the Crumbs protein family. In terms of assembly, component of a complex composed of PALS1, CRB1 and EPB41L5. Within the complex, interacts (via intracellular domain) with PALS1 and EPB41L5 (via FERM domain). Forms a complex with MPP4 and PALS1. Interacts with MPDZ/MUPP1 and MPP4. Glycosylated. As to expression, expressed in the kidney, lung, stomach and testis. Expressed in the brain. Expressed in the retina of the eye. Expressed in the outer nuclear layer, photoreceptor layer and inner nuclear layer of the retina. Expressed in Mueller cell radial processes in the inner nuclear layer, in apical processes sclerad to the external limiting membrane, and in the subapical region, adjacent to the adherens junction of retinal photoreceptors. In the brain, expressed in the granular layer of the cerebellum, the hippocampal dentate gyrus, the olfactory bulbs, the subventricular region lining the telencephalic ventricles and the rostral migratory stream. In terms of tissue distribution, ubiquitously expressed.

The protein localises to the apical cell membrane. Its subcellular location is the secreted. It is found in the cell projection. The protein resides in the cilium. It localises to the photoreceptor outer segment. The protein localises to the photoreceptor inner segment. Its subcellular location is the cytoplasm. It is found in the cell junction. The protein resides in the focal adhesion. Functionally, plays a role in photoreceptor morphogenesis in the retina. May maintain cell polarization and adhesion. In terms of biological role, may play a role in epidermal tissue morphogenesis. May function in cell attachment for stratified epithelial organization. This Mus musculus (Mouse) protein is Protein crumbs homolog 1 (Crb1).